Consider the following 320-residue polypeptide: Lipoyl synthase (320 aa).

Residues 1-26 (MVTVVDRVTSRRLRHPEKMHRPDTSI) form a disordered region. [4Fe-4S] cluster is bound by residues cysteine 59, cysteine 64, cysteine 70, cysteine 85, cysteine 89, cysteine 92, and serine 298. A Radical SAM core domain is found at 71–287 (WSQRHASFMI…AKIGKVKGFL (217 aa)).

This sequence belongs to the radical SAM superfamily. Lipoyl synthase family. [4Fe-4S] cluster is required as a cofactor.

The protein resides in the cytoplasm. It catalyses the reaction [[Fe-S] cluster scaffold protein carrying a second [4Fe-4S](2+) cluster] + N(6)-octanoyl-L-lysyl-[protein] + 2 oxidized [2Fe-2S]-[ferredoxin] + 2 S-adenosyl-L-methionine + 4 H(+) = [[Fe-S] cluster scaffold protein] + N(6)-[(R)-dihydrolipoyl]-L-lysyl-[protein] + 4 Fe(3+) + 2 hydrogen sulfide + 2 5'-deoxyadenosine + 2 L-methionine + 2 reduced [2Fe-2S]-[ferredoxin]. The protein operates within protein modification; protein lipoylation via endogenous pathway; protein N(6)-(lipoyl)lysine from octanoyl-[acyl-carrier-protein]: step 2/2. Functionally, catalyzes the radical-mediated insertion of two sulfur atoms into the C-6 and C-8 positions of the octanoyl moiety bound to the lipoyl domains of lipoate-dependent enzymes, thereby converting the octanoylated domains into lipoylated derivatives. This chain is Lipoyl synthase, found in Bartonella quintana (strain Toulouse) (Rochalimaea quintana).